The sequence spans 237 residues: Ribonuclease PH (237 aa).

Residues R86 and 124–126 (GTR) each bind phosphate.

This sequence belongs to the RNase PH family. Homohexameric ring arranged as a trimer of dimers.

It carries out the reaction tRNA(n+1) + phosphate = tRNA(n) + a ribonucleoside 5'-diphosphate. Its function is as follows. Phosphorolytic 3'-5' exoribonuclease that plays an important role in tRNA 3'-end maturation. Removes nucleotide residues following the 3'-CCA terminus of tRNAs; can also add nucleotides to the ends of RNA molecules by using nucleoside diphosphates as substrates, but this may not be physiologically important. Probably plays a role in initiation of 16S rRNA degradation (leading to ribosome degradation) during starvation. In Shewanella woodyi (strain ATCC 51908 / MS32), this protein is Ribonuclease PH.